The chain runs to 105 residues: UPF0235 protein RrIowa_1526 (105 aa).

It belongs to the UPF0235 family.

This chain is UPF0235 protein RrIowa_1526, found in Rickettsia rickettsii (strain Iowa).